A 372-amino-acid polypeptide reads, in one-letter code: Beta sliding clamp (372 aa).

Belongs to the beta sliding clamp family. Forms a ring-shaped head-to-tail homodimer around DNA which binds and tethers DNA polymerases and other proteins to the DNA. The DNA replisome complex has a single clamp-loading complex (3 tau and 1 each of delta, delta', psi and chi subunits) which binds 3 Pol III cores (1 core on the leading strand and 2 on the lagging strand) each with a beta sliding clamp dimer. Additional proteins in the replisome are other copies of gamma, psi and chi, Ssb, DNA helicase and RNA primase.

The protein localises to the cytoplasm. Functionally, confers DNA tethering and processivity to DNA polymerases and other proteins. Acts as a clamp, forming a ring around DNA (a reaction catalyzed by the clamp-loading complex) which diffuses in an ATP-independent manner freely and bidirectionally along dsDNA. Initially characterized for its ability to contact the catalytic subunit of DNA polymerase III (Pol III), a complex, multichain enzyme responsible for most of the replicative synthesis in bacteria; Pol III exhibits 3'-5' exonuclease proofreading activity. The beta chain is required for initiation of replication as well as for processivity of DNA replication. This Caulobacter vibrioides (strain ATCC 19089 / CIP 103742 / CB 15) (Caulobacter crescentus) protein is Beta sliding clamp (dnaN).